The sequence spans 338 residues: Glycerol-3-phosphate dehydrogenase [NAD(P)+] (338 aa).

NADPH contacts are provided by Ser-18, Tyr-19, His-39, and Lys-113. Residues Lys-113, Gly-142, and Thr-144 each coordinate sn-glycerol 3-phosphate. Position 146 (Ala-146) interacts with NADPH. Positions 198, 251, 261, 262, and 263 each coordinate sn-glycerol 3-phosphate. The active-site Proton acceptor is Lys-198. Arg-262 contacts NADPH. Residues Val-286 and Glu-288 each coordinate NADPH.

The protein belongs to the NAD-dependent glycerol-3-phosphate dehydrogenase family.

Its subcellular location is the cytoplasm. The catalysed reaction is sn-glycerol 3-phosphate + NAD(+) = dihydroxyacetone phosphate + NADH + H(+). The enzyme catalyses sn-glycerol 3-phosphate + NADP(+) = dihydroxyacetone phosphate + NADPH + H(+). It functions in the pathway membrane lipid metabolism; glycerophospholipid metabolism. Functionally, catalyzes the reduction of the glycolytic intermediate dihydroxyacetone phosphate (DHAP) to sn-glycerol 3-phosphate (G3P), the key precursor for phospholipid synthesis. In Photobacterium profundum (strain SS9), this protein is Glycerol-3-phosphate dehydrogenase [NAD(P)+].